A 330-amino-acid chain; its full sequence is Flotillin-like protein FloA (330 aa).

Transmembrane regions (helical) follow at residues 5-25 (FLPL…FYYV) and 27-47 (FLLW…QLFL).

Belongs to the flotillin-like FloA family. As to quaternary structure, homooligomerizes.

It localises to the cell membrane. The protein resides in the membrane raft. Found in functional membrane microdomains (FMM) that may be equivalent to eukaryotic membrane rafts. FMMs are highly dynamic and increase in number as cells age. Flotillins are thought to be important factors in membrane fluidity. The chain is Flotillin-like protein FloA from Parabacteroides distasonis (strain ATCC 8503 / DSM 20701 / CIP 104284 / JCM 5825 / NCTC 11152).